Reading from the N-terminus, the 429-residue chain is Septin-8 (429 aa).

Positions 1 to 16 (MAATDLERVSNAEPEP) are enriched in basic and acidic residues. The segment at 1–23 (MAATDLERVSNAEPEPRSLSLGG) is disordered. Position 2 is an N-acetylalanine (A2). S10 bears the Phosphoserine mark. A Septin-type G domain is found at 41 to 307 (QGFSFNILCV…ELYRRCKLEE (267 aa)). Residues 51-58 (GETGIGKS) form a G1 motif region. GTP is bound by residues 51 to 58 (GETGIGKS), G106, 187 to 195 (KADTISKSE), G241, and R256. The interval 103-106 (DAVG) is G3 motif. The interval 186 to 189 (AKAD) is G4 motif. A coiled-coil region spans residues 320–412 (FSLQETYEAK…AAMEALQSQA (93 aa)). A compositionally biased stretch (polar residues) spans 409–420 (QSQALHATSQQP). Residues 409–429 (QSQALHATSQQPLRKDKDKKN) are disordered.

This sequence belongs to the TRAFAC class TrmE-Era-EngA-EngB-Septin-like GTPase superfamily. Septin GTPase family. In terms of assembly, septins polymerize into heterooligomeric protein complexes that form filaments, and can associate with cellular membranes, actin filaments and microtubules. GTPase activity is required for filament formation. Interacts with SEPTIN5. Interacts with CDK14, SEPTIN4 and SEPTIN7. Interacts with VAMP2; the interaction inhibits interaction of VAMP2 with SYP. Interacts with STX1A.

It is found in the cytoplasm. The protein localises to the cytoskeleton. The protein resides in the synapse. It localises to the cell projection. Its subcellular location is the axon. It is found in the cytoplasmic vesicle. The protein localises to the secretory vesicle. The protein resides in the synaptic vesicle membrane. It localises to the presynapse. In terms of biological role, filament-forming cytoskeletal GTPase. May play a role in platelet secretion. Seems to participate in the process of SNARE complex formation in synaptic vesicles. In Mus musculus (Mouse), this protein is Septin-8.